The chain runs to 124 residues: Small ribosomal subunit protein uS12 (124 aa).

The tract at residues 1–28 (MPTIQQLIRTERQSSKAKTKSPALKSCP) is disordered. Asp-89 is modified (3-methylthioaspartic acid). The interval 104-124 (TAGVKDRRQSRSKYGAKTPKE) is disordered.

The protein belongs to the universal ribosomal protein uS12 family. As to quaternary structure, part of the 30S ribosomal subunit. Contacts proteins S8 and S17. May interact with IF1 in the 30S initiation complex.

Functionally, with S4 and S5 plays an important role in translational accuracy. Its function is as follows. Interacts with and stabilizes bases of the 16S rRNA that are involved in tRNA selection in the A site and with the mRNA backbone. Located at the interface of the 30S and 50S subunits, it traverses the body of the 30S subunit contacting proteins on the other side and probably holding the rRNA structure together. The combined cluster of proteins S8, S12 and S17 appears to hold together the shoulder and platform of the 30S subunit. This chain is Small ribosomal subunit protein uS12, found in Synechococcus sp. (strain WH7803).